The sequence spans 600 residues: Elongation factor 4 (600 aa).

The 183-residue stretch at 5–187 (KYIRNFSIVA…EIVEKIPAPE (183 aa)) folds into the tr-type G domain. GTP is bound by residues 17–22 (DHGKST) and 134–137 (NKVD).

It belongs to the TRAFAC class translation factor GTPase superfamily. Classic translation factor GTPase family. LepA subfamily.

It is found in the cell membrane. It catalyses the reaction GTP + H2O = GDP + phosphate + H(+). In terms of biological role, required for accurate and efficient protein synthesis under certain stress conditions. May act as a fidelity factor of the translation reaction, by catalyzing a one-codon backward translocation of tRNAs on improperly translocated ribosomes. Back-translocation proceeds from a post-translocation (POST) complex to a pre-translocation (PRE) complex, thus giving elongation factor G a second chance to translocate the tRNAs correctly. Binds to ribosomes in a GTP-dependent manner. This chain is Elongation factor 4, found in Clostridium perfringens (strain 13 / Type A).